We begin with the raw amino-acid sequence, 1070 residues long: MSPAKRWGSPCLFPLQLFSLCWVLSVAQSKTVRYSTFEEDAPGTVIGTLAEDLHMKVSGDTSFRLMKQFNSSLLRVREGDGQLTVGDAGLDRERLCGPSPQCVLAFDVVSFSQEQFRLVHVEVEVRDVNDHAPRFPRAQIPVEVSESAPVGTRIPLEVPVDEDVGANGLQSVRLAEPHSPFRVELQTRADGAQCADLVLLQELDRESQASYSLELVAQDGGRPPRSATAALSVRVLDANDHSPAFPQGAVAEVELAEDAPVGSLLLDLDAADPDEGPNGDVVFTFGARTPPEARHLFRLDPRSGRLTLAGQVDYERQDTYELDVRAQDRGPGPRTATCKVIVRIRDVNDNAPEISITPLAAPGAPATSPFAAAAAAAALGGADAASSTGSGTQEAGITSLVPEGAARESLVALVSTSDRDSGANGQVRCALYGHEHFRLQPAYAGSYLVVTAASLDRERIAEYNLTLVAEDRGTPPLRTVRPYTVRVGDENDNAPIFTKPVYEVSVRENNPPGAYLATVAARDPDVGRNGQVTYRLVEAEVGRSGEAVSTYVSVDPATGAIYALRSFDYETLRQLDVRVQASDGGSPQLSSNALVQVRVLDQNDHSPILVHPAPANGSLEVAVPGRSTKDTAVARIQARDADEGANGELAFDLLQQEPREAFSIGRHTGEIMLTGDLSQEPPGRVFKALLVISDGGRPPLTTTATVSFVVTAGGGSAVPASSGSPEHSRPPGSRLAPSGPSLQWDTPLIVIIVLAGSCTLLLAAIIAIATTCNRRKKEVRKGGALREERPGAAGGGASAPGSPDETARGTGPRPNMFDVLTFPGSGKAPFGSPAADAPPPAVAAAEVPGSEGGSATGESACHFEGQQRLRGAHAEPYGASPGFGKEPAAPPVAVWKGHSFNTISGREAEKFSGKDSGKGDSDFNDSDSDISGDALKKDLINHMQSGLWACTAECKILGHSDRCWSPSCAGPNVHPPPHPPAQMSTFCKSTSLPRDPLRRDNYYQAQLPKTVGLQSVYEKVLHRDYDRTVTLLSPPRPGRLPDLQEIGVPLYESPPGSRYVSPKKGINENV.

A signal peptide spans 1 to 29 (MSPAKRWGSPCLFPLQLFSLCWVLSVAQS). Cadherin domains are found at residues 30–135 (KTVR…APRF), 136–245 (PRAQ…SPAF), 247–354 (QGAV…APEI), 393–497 (QEAG…APIF), 498–609 (TKPV…SPIL), and 615–721 (ANGS…VPAS). Over 30–747 (KTVRYSTFEE…SGPSLQWDTP (718 aa)) the chain is Extracellular. The N-linked (GlcNAc...) asparagine glycan is linked to Asn-616. Low complexity predominate over residues 716–725 (SAVPASSGSP). Positions 716–740 (SAVPASSGSPEHSRPPGSRLAPSGP) are disordered. The helical transmembrane segment at 748-768 (LIVIIVLAGSCTLLLAAIIAI) threads the bilayer. Over 769-1070 (ATTCNRRKKE…SPKKGINENV (302 aa)) the chain is Cytoplasmic. Disordered regions lie at residues 777–859 (KEVR…TGES), 906–928 (REAE…DSDS), and 1046–1070 (IGVP…NENV). Composition is skewed to basic and acidic residues over residues 780 to 790 (RKGGALREERP) and 906 to 921 (REAE…KGDS). Ser-1053 is subject to Phosphoserine.

As to quaternary structure, the N-terminal extracellular domain forms homophilic interactions; these interactions activate p38 MAPK via TAOK2 and trigger endocytosis. Interacts with CDH2; this interaction may lead to CDH2 cointernalization. Interacts with CDH11. Interacts with TAOK2.

It is found in the cell membrane. It localises to the cell projection. The protein localises to the dendrite. The protein resides in the presynaptic cell membrane. Its subcellular location is the postsynaptic cell membrane. Its function is as follows. Calcium-dependent cell-adhesion protein. May play a role in activity-induced synaptic reorganization underlying long term memory. Could be involved in CDH2 internalization through TAOK2/p38 MAPK pathway. In hippocampal neurons, may play a role in the down-regulation of dendritic spines, maybe through its action on CDH2 endocytosis. This Mus musculus (Mouse) protein is Protocadherin-8 (Pcdh8).